We begin with the raw amino-acid sequence, 447 residues long: Phosphoglucosamine mutase (447 aa).

Residue serine 108 is the Phosphoserine intermediate of the active site. Positions 108, 247, 249, and 251 each coordinate Mg(2+). Serine 108 bears the Phosphoserine mark.

It belongs to the phosphohexose mutase family. It depends on Mg(2+) as a cofactor. Post-translationally, activated by phosphorylation.

The catalysed reaction is alpha-D-glucosamine 1-phosphate = D-glucosamine 6-phosphate. Its function is as follows. Catalyzes the conversion of glucosamine-6-phosphate to glucosamine-1-phosphate. This chain is Phosphoglucosamine mutase, found in Bordetella avium (strain 197N).